The chain runs to 329 residues: Glutamyl-Q tRNA(Asp) synthetase (329 aa).

Residues 8-12 (RLAPS) and Glu44 contribute to the L-glutamate site. The 'HIGH' region motif lies at 11-21 (PSPTGAQHLGN). Zn(2+) is bound by residues Cys100, Cys102, Tyr129, and Cys133. The L-glutamate site is built by Tyr196 and Arg214. Residues 252-256 (RLAKR) carry the 'KMSKS' region motif. Lys255 serves as a coordination point for ATP.

The protein belongs to the class-I aminoacyl-tRNA synthetase family. GluQ subfamily. The cofactor is Zn(2+).

Its function is as follows. Catalyzes the tRNA-independent activation of glutamate in presence of ATP and the subsequent transfer of glutamate onto a tRNA(Asp). Glutamate is transferred on the 2-amino-5-(4,5-dihydroxy-2-cyclopenten-1-yl) moiety of the queuosine in the wobble position of the QUC anticodon. The polypeptide is Glutamyl-Q tRNA(Asp) synthetase (Rhodopirellula baltica (strain DSM 10527 / NCIMB 13988 / SH1)).